The primary structure comprises 408 residues: 2,3-bisphosphoglycerate-independent phosphoglycerate mutase 1 (408 aa).

Belongs to the BPG-independent phosphoglycerate mutase family. A-PGAM subfamily. In terms of assembly, monomer. Mn(2+) is required as a cofactor.

The catalysed reaction is (2R)-2-phosphoglycerate = (2R)-3-phosphoglycerate. Its pathway is carbohydrate degradation; glycolysis; pyruvate from D-glyceraldehyde 3-phosphate: step 3/5. In terms of biological role, catalyzes the interconversion of 2-phosphoglycerate and 3-phosphoglycerate. The protein is 2,3-bisphosphoglycerate-independent phosphoglycerate mutase 1 (apgM1) of Archaeoglobus fulgidus (strain ATCC 49558 / DSM 4304 / JCM 9628 / NBRC 100126 / VC-16).